The following is a 217-amino-acid chain: 3,4-dihydroxy-2-butanone 4-phosphate synthase (217 aa).

Residues 37 to 38 (RE), Asp42, 150 to 154 (RRGHT), and Glu174 contribute to the D-ribulose 5-phosphate site. Residue Glu38 coordinates Mg(2+). His153 is a binding site for Mg(2+).

Belongs to the DHBP synthase family. In terms of assembly, homodimer. It depends on Mg(2+) as a cofactor. Mn(2+) serves as cofactor.

It catalyses the reaction D-ribulose 5-phosphate = (2S)-2-hydroxy-3-oxobutyl phosphate + formate + H(+). It participates in cofactor biosynthesis; riboflavin biosynthesis; 2-hydroxy-3-oxobutyl phosphate from D-ribulose 5-phosphate: step 1/1. Catalyzes the conversion of D-ribulose 5-phosphate to formate and 3,4-dihydroxy-2-butanone 4-phosphate. The polypeptide is 3,4-dihydroxy-2-butanone 4-phosphate synthase (Pseudoalteromonas translucida (strain TAC 125)).